Consider the following 914-residue polypeptide: Polyribonucleotide nucleotidyltransferase (914 aa).

The disordered stretch occupies residues 407-427 (YMHNYEMPPYSTGETGRVGSP). Asp-521 and Asp-527 together coordinate Mg(2+). The 60-residue stretch at 587 to 646 (PRIITTSVPVEKIGEVIGPKGKMINQIQEDTGAEIAIEDDGTVFISSEGGEAAKKAKSII) folds into the KH domain. In terms of domain architecture, S1 motif spans 658 to 730 (GETYNGKVVK…DRGKISLAIP (73 aa)). The interval 727–914 (LAIPGFEDQE…VRRDFDPFED (188 aa)) is disordered. Composition is skewed to basic and acidic residues over residues 742–789 (SRGD…RRSD), 797–865 (DRPR…DRRG), and 873–899 (RGSD…ERTE).

The protein belongs to the polyribonucleotide nucleotidyltransferase family. Requires Mg(2+) as cofactor.

It localises to the cytoplasm. The catalysed reaction is RNA(n+1) + phosphate = RNA(n) + a ribonucleoside 5'-diphosphate. Its function is as follows. Involved in mRNA degradation. Catalyzes the phosphorolysis of single-stranded polyribonucleotides processively in the 3'- to 5'-direction. This is Polyribonucleotide nucleotidyltransferase from Bifidobacterium longum subsp. infantis (strain ATCC 15697 / DSM 20088 / JCM 1222 / NCTC 11817 / S12).